The chain runs to 60 residues: Lantibiotic Pep5 (60 aa).

Residues 1-26 (MKNNKNLFDLEIKKETSQNTDELEPQ) constitute a propeptide that is removed on maturation. Residues 1–29 (MKNNKNLFDLEIKKETSQNTDELEPQTAG) are disordered. Threonine 27 bears the 2-oxobutanoic acid mark. Residues 35–39 (SVKQC) constitute a cross-link (lanthionine (Ser-Cys)). 2 positions are modified to 2,3-didehydrobutyrine: threonine 42 and threonine 46. The segment at residues 50 to 53 (TVSC) is a cross-link (beta-methyllanthionine (Thr-Cys)). The lanthionine (Ser-Cys) cross-link spans 52-59 (SCKGKNGC).

Belongs to the type A lantibiotic family. In terms of processing, maturation of lantibiotics involves the enzymatic conversion of Thr, and Ser into dehydrated AA and the formation of thioether bonds with cysteine. This is followed by membrane translocation and cleavage of the modified precursor. After proteolysis of the propeptide, the N-terminal 2,3-didehydrobutyrine hydrolyzes to 2-oxobutanoic acid, possibly spontaneously.

Its function is as follows. Lanthionine-containing peptide antibiotic (lantibiotic) active on Gram-positive bacteria. The bactericidal activity of lantibiotics is based on depolarization of energized bacterial cytoplasmic membranes, initiated by the formation of aqueous transmembrane pores. This Staphylococcus epidermidis protein is Lantibiotic Pep5 (pepA).